We begin with the raw amino-acid sequence, 4218 residues long: Protein Obscurin (4218 aa).

Positions 3–71 constitute an SH3 domain; it reads AVADIVFVSR…PIDILEFNPT (69 aa). A DH domain is found at 86-264; it reads RKLTILRELV…LSVPSRAYDN (179 aa). A coiled-coil region spans residues 439 to 466; that stretch reads SKETKERLQHEQQELLKLEQEAIELYKK. 4 disordered regions span residues 465–592, 684–703, 728–750, and 923–1010; these read KKQQ…SHSK, SLRDGDTAPAGGSPGRQQGY, SGANQHLQQSGPPPPPIPPNFTR, and RYET…EDRP. Low complexity-rich tracts occupy residues 466-490 and 505-517; these read KQQSSKSVSSKTESVEITSSQVKSS and AQVKEVTPVKVVS. A compositionally biased stretch (basic and acidic residues) spans 578 to 592; sequence KEVRKEVPPSASHSK. Over residues 923-935 the composition is skewed to basic and acidic residues; that stretch reads RYETKTRDYDRGT. A compositionally biased stretch (polar residues) spans 936 to 948; it reads SYDSTVERSQYGI. Basic and acidic residues-rich tracts occupy residues 950-962 and 972-986; these read SRRDRSSVDKVEA and TESRAASRAESRAES. Positions 987–996 are enriched in low complexity; it reads RASYSVAESR. Ig-like C2-type domains are found at residues 1017 to 1103, 1152 to 1298, 1313 to 1400, 1504 to 1594, 1599 to 1689, 1694 to 1785, 1815 to 1906, 2018 to 2107, 2113 to 2214, 2220 to 2305, 2318 to 2409, 2415 to 2505, 2519 to 2609, 2614 to 2698, and 2716 to 2792; these read PVVV…TTVS, PRVK…AELS, PTLV…SSIN, PVIV…TQLL, PEFT…CVVT, PKVK…CKVA, PEIV…LSLS, PEIS…FNLA, PTFI…FKLA, PSFV…EKVA, PKFL…VEIV, PVFV…AKLY, PQFV…ANVR, PPVF…KDIT, and PPVF…SCRI. A disulfide bond links cysteine 1199 and cysteine 1282. An intrachain disulfide couples cysteine 2739 to cysteine 2790. A Fibronectin type-III 1 domain is found at 2832 to 2933; the sequence is APPPLSEGPI…TYRQKLVPDP (102 aa). A Protein kinase 1 domain is found at 3186–3440; it reads YDIGDELGRG…VKTALKHPWF (255 aa). 7 residues coordinate ATP: glycine 3198, lysine 3215, glutamate 3260, alanine 3262, glutamate 3266, lysine 3310, and aspartate 3326. The Ig-like C2-type 16 domain occupies 3654–3738; that stretch reads PFFREKPQTI…ARNKVGQTVA (85 aa). Residues 3750 to 3843 enclose the Fibronectin type-III 2 domain; sequence APDSPEISAN…IPVSASTVGG (94 aa). In terms of domain architecture, Protein kinase 2 spans 3897–4151; the sequence is YSFISEIARG…TEDCLEHRWL (255 aa).

The protein belongs to the protein kinase superfamily. CAMK Ser/Thr protein kinase family. As to quaternary structure, interacts with myosin. May interact (via protein kinase domain 1) with ball. May interact (via protein kinase domain 1 or 2) with mask. May interact (via protein kinase domain 2) with Tm1/tropomyosin-1. As to expression, expressed in the thoracic muscles including the indirect flight muscles (IFM) (at protein level).

The protein localises to the cytoplasm. The protein resides in the myofibril. Its subcellular location is the sarcomere. It localises to the m line. In terms of biological role, structural component of the muscle M line which is involved in assembly and organization of sarcomere. Required for the development and organization of indirect flight muscle sarcomeres by regulating the formation of M line and H zone and the correct assembly of thick and thin filaments in the sarcomere. Lacks serine/threonine-protein kinase activity. This Drosophila melanogaster (Fruit fly) protein is Protein Obscurin.